A 282-amino-acid chain; its full sequence is NADPH-dependent 7-cyano-7-deazaguanine reductase (282 aa).

88 to 90 (IES) lines the substrate pocket. 90 to 91 (SK) serves as a coordination point for NADPH. C190 acts as the Thioimide intermediate in catalysis. The active-site Proton donor is the D197. 229-230 (HE) is a substrate binding site. 258 to 259 (RG) provides a ligand contact to NADPH.

Belongs to the GTP cyclohydrolase I family. QueF type 2 subfamily. Homodimer.

Its subcellular location is the cytoplasm. The catalysed reaction is 7-aminomethyl-7-carbaguanine + 2 NADP(+) = 7-cyano-7-deazaguanine + 2 NADPH + 3 H(+). Its pathway is tRNA modification; tRNA-queuosine biosynthesis. Catalyzes the NADPH-dependent reduction of 7-cyano-7-deazaguanine (preQ0) to 7-aminomethyl-7-deazaguanine (preQ1). The polypeptide is NADPH-dependent 7-cyano-7-deazaguanine reductase (Salmonella paratyphi A (strain ATCC 9150 / SARB42)).